Consider the following 67-residue polypeptide: Phycobilisome 7.8 kDa linker polypeptide, allophycocyanin-associated, core (67 aa).

A CpcD-like domain is found at 1 to 56; that stretch reads MRVFKVTACVPSQTRIRTQRELQNTYFTKLVPYDNWFREQQRIMKMGGKIVKVELA.

The protein belongs to the phycobilisome linker protein family.

Its subcellular location is the cellular thylakoid membrane. Rod linker protein, associated with allophycocyanin. Linker polypeptides determine the state of aggregation and the location of the disk-shaped phycobiliprotein units within the phycobilisome and modulate their spectroscopic properties in order to mediate a directed and optimal energy transfer. This is Phycobilisome 7.8 kDa linker polypeptide, allophycocyanin-associated, core (apcC) from Arthrospira platensis (Spirulina platensis).